A 367-amino-acid chain; its full sequence is Riboflavin biosynthesis protein VVA0006 (367 aa).

215-219 is a GTP binding site; sequence RLHSE. Cysteine 220, cysteine 231, and cysteine 233 together coordinate Zn(2+). Residues glutamine 236, 258–260, and threonine 280 contribute to the GTP site; that span reads EGR. Aspartate 292 serves as the catalytic Proton acceptor. The active-site Nucleophile is arginine 294. GTP is bound by residues threonine 315 and lysine 320.

This sequence in the N-terminal section; belongs to the YbiA family. It in the C-terminal section; belongs to the GTP cyclohydrolase II family. Requires Zn(2+) as cofactor.

The enzyme catalyses 2,5-diamino-6-hydroxy-4-(5-phosphoribosylamino)-pyrimidine + H2O = 2,5,6-triamino-4-hydroxypyrimidine + D-ribose 5-phosphate. It carries out the reaction 5-amino-6-(5-phospho-D-ribosylamino)uracil + H2O = 5,6-diaminouracil + D-ribose 5-phosphate. The catalysed reaction is GTP + 4 H2O = 2,5-diamino-6-hydroxy-4-(5-phosphoribosylamino)-pyrimidine + formate + 2 phosphate + 3 H(+). It participates in cofactor biosynthesis; riboflavin biosynthesis; 5-amino-6-(D-ribitylamino)uracil from GTP: step 1/4. Functionally, catalyzes the hydrolysis of the N-glycosidic bond in the first two intermediates of riboflavin biosynthesis, which are highly reactive metabolites, yielding relatively innocuous products. Thus, can divert a surplus of harmful intermediates into relatively harmless products and pre-empt the damage these intermediates would otherwise do. Has no activity against GTP, nucleoside monophosphates or ADP-ribose. Its function is as follows. Catalyzes the conversion of GTP to 2,5-diamino-6-ribosylamino-4(3H)-pyrimidinone 5'-phosphate (DARP), formate and pyrophosphate. This Vibrio vulnificus (strain YJ016) protein is Riboflavin biosynthesis protein VVA0006.